A 671-amino-acid chain; its full sequence is DNA ligase (671 aa).

NAD(+) contacts are provided by residues 36-40 (DAEYD), 85-86 (SL), and glutamate 116. Lysine 118 functions as the N6-AMP-lysine intermediate in the catalytic mechanism. Positions 139, 176, 292, and 316 each coordinate NAD(+). The Zn(2+) site is built by cysteine 410, cysteine 413, cysteine 428, and cysteine 434. The region spanning 591–671 (QKGGRFQGMT…QFLAMFSEKE (81 aa)) is the BRCT domain.

The protein belongs to the NAD-dependent DNA ligase family. LigA subfamily. Mg(2+) serves as cofactor. Requires Mn(2+) as cofactor.

It catalyses the reaction NAD(+) + (deoxyribonucleotide)n-3'-hydroxyl + 5'-phospho-(deoxyribonucleotide)m = (deoxyribonucleotide)n+m + AMP + beta-nicotinamide D-nucleotide.. Functionally, DNA ligase that catalyzes the formation of phosphodiester linkages between 5'-phosphoryl and 3'-hydroxyl groups in double-stranded DNA using NAD as a coenzyme and as the energy source for the reaction. It is essential for DNA replication and repair of damaged DNA. The polypeptide is DNA ligase (Acidithiobacillus ferrooxidans (strain ATCC 23270 / DSM 14882 / CIP 104768 / NCIMB 8455) (Ferrobacillus ferrooxidans (strain ATCC 23270))).